Consider the following 410-residue polypeptide: Cell division protein FtsZ (410 aa).

GTP-binding positions include 22–26, 109–111, E140, R144, and D188; these read GGGGN and GTG. A disordered region spans residues 318–410; that stretch reads ESKKDRKPHR…STPPFFRRKR (93 aa). Residues 330 to 344 show a composition bias toward polar residues; it reads RQAVQPMQQTTQSVE. Positions 360–398 are enriched in basic and acidic residues; that stretch reads WDIRREQNTRPKVDESSLEQVDKKEFDTFHREEPNHNDD.

It belongs to the FtsZ family. In terms of assembly, homodimer. Polymerizes to form a dynamic ring structure in a strictly GTP-dependent manner. Interacts directly with several other division proteins.

Its subcellular location is the cytoplasm. Essential cell division protein that forms a contractile ring structure (Z ring) at the future cell division site. The regulation of the ring assembly controls the timing and the location of cell division. One of the functions of the FtsZ ring is to recruit other cell division proteins to the septum to produce a new cell wall between the dividing cells. Binds GTP and shows GTPase activity. In Enterococcus faecalis (strain ATCC 700802 / V583), this protein is Cell division protein FtsZ.